Reading from the N-terminus, the 315-residue chain is Calcium homeostasis modulator protein 6 (315 aa).

Over 1-21 the chain is Cytoplasmic; sequence MEKFRAVLDLHVKHHSALGYG. A helical transmembrane segment spans residues 22–37; the sequence is LVTLLTAGGERIFSAV. At 38-46 the chain is on the extracellular side; the sequence is AFQCPCSAA. 3 disulfide bridges follow: C41–C126, C43–C155, and C139–C146. The chain crosses the membrane as a helical span at residues 47-68; sequence WNLPYGLVFLLVPALALFLLGY. Topologically, residues 69-102 are cytoplasmic; that stretch reads VLSARTWRLLTGCCSSARASCGSALRGSLVCTQI. A helical transmembrane segment spans residues 103-127; that stretch reads SAAAALAPLTWVAVALLGGAFYECA. At 128 to 169 the chain is on the extracellular side; it reads ATGSAAFAQRLCLGRNRSCAAELPLVPCNQAKASDVQDLLKD. A helical transmembrane segment spans residues 170–192; the sequence is LKAQSQVLGWILIAVVIIILLIF. Residues 193 to 315 are Cytoplasmic-facing; it reads TSVTRCLSPV…SSGINSTPEL (123 aa).

This sequence belongs to the CALHM family. In terms of assembly, oligomerizes to form decameric and undecameric channels. In terms of processing, N-glycosylated. Placenta.

The protein localises to the cell membrane. The catalysed reaction is ATP(in) = ATP(out). Its function is as follows. Pore-forming subunit of an ATP-permeable channel. In response to pathogen-derived and proinflammatory stimuli, relocates from intracellular compartments to NK-dendritic cell and NK-macrophage immune synapses where it mediates ATP efflux and NK cell activation involved in antimicrobial and antitumor responses. May assemble to form gap junction channel-like structures with gating and ion conductance likely regulated by membrane lipids and voltage rather than by extracellular calcium levels. The protein is Calcium homeostasis modulator protein 6 of Homo sapiens (Human).